Here is a 927-residue protein sequence, read N- to C-terminus: Protein unc-45 homolog B (927 aa).

3 TPR repeats span residues 4–37 (PVQL…ITDK), 41–74 (AVLY…DASD), and 76–108 (KALF…EPKN). ARM repeat units follow at residues 167 to 206 (DAGA…GMCT), 209 to 248 (RARA…NIVD), and 746 to 785 (DKLR…NLAV).

The protein localises to the cytoplasm. Its subcellular location is the myofibril. It is found in the sarcomere. It localises to the z line. The protein resides in the a band. The protein localises to the perinuclear region. Its subcellular location is the cytosol. Functionally, acts as a co-chaperone for HSP90 and is required for proper folding of the myosin motor domain. Plays a role in sarcomere formation during muscle cell assembly. Is necessary for normal early lens development. The chain is Protein unc-45 homolog B from Xenopus laevis (African clawed frog).